Reading from the N-terminus, the 141-residue chain is ATP synthase epsilon chain (141 aa).

This sequence belongs to the ATPase epsilon chain family. As to quaternary structure, F-type ATPases have 2 components, CF(1) - the catalytic core - and CF(0) - the membrane proton channel. CF(1) has five subunits: alpha(3), beta(3), gamma(1), delta(1), epsilon(1). CF(0) has three main subunits: a, b and c.

The protein resides in the cell inner membrane. Produces ATP from ADP in the presence of a proton gradient across the membrane. This chain is ATP synthase epsilon chain (atpC), found in Acidithiobacillus ferridurans.